Here is a 316-residue protein sequence, read N- to C-terminus: Thymidylate synthase (316 aa).

DUMP is bound by residues arginine 23 and 178-179 (RR). Catalysis depends on cysteine 198, which acts as the Nucleophile. Residues 218 to 221 (RSAD), asparagine 229, and 259 to 261 (HLY) contribute to the dUMP site. Position 221 (aspartate 221) interacts with (6R)-5,10-methylene-5,6,7,8-tetrahydrofolate. Alanine 315 provides a ligand contact to (6R)-5,10-methylene-5,6,7,8-tetrahydrofolate.

The protein belongs to the thymidylate synthase family. Bacterial-type ThyA subfamily. Homodimer.

It is found in the cytoplasm. It carries out the reaction dUMP + (6R)-5,10-methylene-5,6,7,8-tetrahydrofolate = 7,8-dihydrofolate + dTMP. It participates in pyrimidine metabolism; dTTP biosynthesis. Catalyzes the reductive methylation of 2'-deoxyuridine-5'-monophosphate (dUMP) to 2'-deoxythymidine-5'-monophosphate (dTMP) while utilizing 5,10-methylenetetrahydrofolate (mTHF) as the methyl donor and reductant in the reaction, yielding dihydrofolate (DHF) as a by-product. This enzymatic reaction provides an intracellular de novo source of dTMP, an essential precursor for DNA biosynthesis. In Lacticaseibacillus paracasei (strain ATCC 334 / BCRC 17002 / CCUG 31169 / CIP 107868 / KCTC 3260 / NRRL B-441) (Lactobacillus paracasei), this protein is Thymidylate synthase.